A 1079-amino-acid chain; its full sequence is DNA ligase 4 (1079 aa).

The disordered stretch occupies residues 1-20 (MAVHAPYNHAPPPTQEINGQ). Glutamate 295, lysine 297, leucine 298, arginine 302, glutamate 357, phenylalanine 395, glutamate 460, lysine 465, lysine 482, and lysine 484 together coordinate ATP. Lysine 297 (N6-AMP-lysine intermediate) is an active-site residue. Glutamate 357 is a Mg(2+) binding site. Residue glutamate 460 coordinates Mg(2+). Residues 699–789 (VETSIFSDMT…TALPFLKEFL (91 aa)) form the BRCT 1 domain. Acidic residues predominate over residues 838–847 (DGEDKDEIDV). Residues 838 to 942 (DGEDKDEIDV…SDVGVNGDDY (105 aa)) are disordered. Basic and acidic residues-rich tracts occupy residues 848 to 878 (EESR…KKLQ) and 900 to 914 (MSLK…ERSR). One can recognise a BRCT 2 domain in the interval 968 to 1078 (DEDRIFYHLA…TLLDEDLYKP (111 aa)).

This sequence belongs to the ATP-dependent DNA ligase family. It depends on Mg(2+) as a cofactor.

It localises to the nucleus. It catalyses the reaction ATP + (deoxyribonucleotide)n-3'-hydroxyl + 5'-phospho-(deoxyribonucleotide)m = (deoxyribonucleotide)n+m + AMP + diphosphate.. Functionally, DNA ligase involved in DNA non-homologous end joining (NHEJ); required for double-strand break (DSB) repair. The protein is DNA ligase 4 (LIG4) of Cryptococcus neoformans var. neoformans serotype D (strain JEC21 / ATCC MYA-565) (Filobasidiella neoformans).